A 597-amino-acid polypeptide reads, in one-letter code: Elongation factor 4 (597 aa).

The 183-residue stretch at 2–184 folds into the tr-type G domain; sequence DHIRNFSIIA…ALVAKVPPPK (183 aa). Residues 14-19 and 131-134 each bind GTP; these read DHGKST and NKID.

This sequence belongs to the TRAFAC class translation factor GTPase superfamily. Classic translation factor GTPase family. LepA subfamily.

It localises to the cell inner membrane. It carries out the reaction GTP + H2O = GDP + phosphate + H(+). Its function is as follows. Required for accurate and efficient protein synthesis under certain stress conditions. May act as a fidelity factor of the translation reaction, by catalyzing a one-codon backward translocation of tRNAs on improperly translocated ribosomes. Back-translocation proceeds from a post-translocation (POST) complex to a pre-translocation (PRE) complex, thus giving elongation factor G a second chance to translocate the tRNAs correctly. Binds to ribosomes in a GTP-dependent manner. The protein is Elongation factor 4 of Paraburkholderia phytofirmans (strain DSM 17436 / LMG 22146 / PsJN) (Burkholderia phytofirmans).